The following is a 493-amino-acid chain: 3-octaprenyl-4-hydroxybenzoate carboxy-lyase (493 aa).

A Mn(2+)-binding site is contributed by asparagine 172. Residues 175–177 (IYR), 189–191 (RWL), and 194–195 (RG) each bind prenylated FMN. Glutamate 238 is a Mn(2+) binding site. Aspartate 287 serves as the catalytic Proton donor.

The protein belongs to the UbiD family. Homohexamer. The cofactor is prenylated FMN. Mn(2+) is required as a cofactor.

Its subcellular location is the cell membrane. The catalysed reaction is a 4-hydroxy-3-(all-trans-polyprenyl)benzoate + H(+) = a 2-(all-trans-polyprenyl)phenol + CO2. The protein operates within cofactor biosynthesis; ubiquinone biosynthesis. In terms of biological role, catalyzes the decarboxylation of 3-octaprenyl-4-hydroxy benzoate to 2-octaprenylphenol, an intermediate step in ubiquinone biosynthesis. The protein is 3-octaprenyl-4-hydroxybenzoate carboxy-lyase of Shewanella baltica (strain OS195).